We begin with the raw amino-acid sequence, 603 residues long: Glutathione-regulated potassium-efflux system protein KefB (603 aa).

13 helical membrane passes run 5-25 (ALLTAGVLFLFVAVVAVPIAA), 29-49 (IGAVLGYLIAGIAIGPWGLGF), 53-73 (VEAILHFSELGVVFLMFIIGL), 87-107 (IFGVGAAQVGLSALILGGALY), 115-135 (SALIGGVGLAMSSTAMALQLM), 152-172 (VLLFQDLAVIPALALIPILAG), 180-202 (WERIGLKVAAFLGMLIGGRYLVR), 207-227 (FIAASGVREVFTAAALLLVLG), 230-250 (LFMEALGLSMALGTFIAGILL), 268-288 (GLLLGLFFISVGMALNLGILY), 291-311 (IVKIMIAVLVLVAVKGAVLYF), 326-346 (FAGVLSQGGEFAFVLFSAAAS), and 356-376 (PLLLVTVTLSMMTTPLLMQVI). Residues 400–521 (EPQVIVVGFG…VRHFSRETFS (122 aa)) form the RCK N-terminal domain.

This sequence belongs to the monovalent cation:proton antiporter 2 (CPA2) transporter (TC 2.A.37) family. KefB subfamily. In terms of assembly, interacts with the regulatory subunit KefG.

It is found in the cell inner membrane. Pore-forming subunit of a potassium efflux system that confers protection against electrophiles. Catalyzes K(+)/H(+) antiport. This is Glutathione-regulated potassium-efflux system protein KefB from Pectobacterium atrosepticum (strain SCRI 1043 / ATCC BAA-672) (Erwinia carotovora subsp. atroseptica).